A 333-amino-acid polypeptide reads, in one-letter code: MSTLKEKLITQIASERTIPNSKVTVVGVGQVGMACAISILGKRLGDELALVDVWEDKLKGEMMDLQHGSLFLQTHKIVADKDYAVTANSKIVVVTAGVRQQEGESRLNLVQRNVNVFKFIIPQIIKYSPDCTILVVSNPVDILTYVTWKLSGLPKHRVIGSGCNLDSARFRYLMSEKLGIHPSSCHGWILGEHGDSSVAVWSGVNVAGVSLQELNPAMGTDRDSEKWKEVHKQVVESAYEVIKLKGYTNWAIGLSVADLLETMMKNLCRVHPVSTMVKGMYGIENEVFLSLPCVLSASGLTSVINQKLKDDEVAQLRSSADTLWSIQKDLKDL.

NAD(+) is bound by residues 29–57 (GQVG…WEDK) and Arg-99. Substrate is bound by residues Arg-106, Asn-138, and Arg-169. Asn-138 serves as a coordination point for NAD(+). The Proton acceptor role is filled by His-193. Position 248 (Thr-248) interacts with substrate.

It belongs to the LDH/MDH superfamily. LDH family. In terms of assembly, homotetramer.

The protein localises to the cytoplasm. The catalysed reaction is (S)-lactate + NAD(+) = pyruvate + NADH + H(+). It functions in the pathway fermentation; pyruvate fermentation to lactate; (S)-lactate from pyruvate: step 1/1. Functionally, interconverts simultaneously and stereospecifically pyruvate and lactate with concomitant interconversion of NADH and NAD(+). The polypeptide is L-lactate dehydrogenase B chain (LDHB) (Alligator mississippiensis (American alligator)).